Reading from the N-terminus, the 423-residue chain is MFEIAKKYMPGGVNSPVRAFKSVEMEPIFVKSAKKSKLIDINNKEYIDYIQSWGALILGHAHEEVVEEIKKQAELGTSYGLCHELEVEMARLIVKHIPSVEMVRMVNSGTEAVMSAIRLARAYTNRELIVKFEGCYHGHSDGLLVKAGSGALTFGTPSSKGVTEKIVSNTLVARYNDIESVKELFDKYGENIACVIVEPVAGNMGVVLPKQGFLEGLREITKEYGSLLIFDEVITGFRVSINGAQGYYNVFPDITTLGKIIGGGLPVGAYGGRKEIMELISPQGPVYQAGTLSGNPLTLAAGIKTIKIIENDPDFYSKLDELGKYFEEGIVSALGDFDVKINRIKSMLSFFFSKQEVDSYEKVINSDVEIYKKLFKCLFENGILLPPSPFESLFISSSHTKEDIEKTVYYFEKFSKKLKEGKV.

An N6-(pyridoxal phosphate)lysine modification is found at K259.

It belongs to the class-III pyridoxal-phosphate-dependent aminotransferase family. HemL subfamily. As to quaternary structure, homodimer. The cofactor is pyridoxal 5'-phosphate.

The protein resides in the cytoplasm. The catalysed reaction is (S)-4-amino-5-oxopentanoate = 5-aminolevulinate. The protein operates within porphyrin-containing compound metabolism; protoporphyrin-IX biosynthesis; 5-aminolevulinate from L-glutamyl-tRNA(Glu): step 2/2. The protein is Glutamate-1-semialdehyde 2,1-aminomutase of Thermosipho africanus (strain TCF52B).